Consider the following 278-residue polypeptide: 1-acyl-sn-glycerol-3-phosphate acyltransferase beta (278 aa).

The first 23 residues, 1-23 (MDPWPWLTAALLLLLLLVQLSRT), serve as a signal peptide directing secretion. Residues 24–29 (ARFYAK) are Lumenal-facing. The helical transmembrane segment at 30 to 50 (VGLYCVLCLSFSAAASIVCLL) threads the bilayer. Over 51–121 (RHGGRTVDNM…PKRCVQIAKR (71 aa)) the chain is Cytoplasmic. The HXXXXD motif signature appears at 98–103 (HQSILD). Residues 122 to 142 (ELMFTGPVGLIMYLGGVYFIN) traverse the membrane as a helical segment. At 143 to 278 (RQQARTAMSV…IKEPGVLPAQ (136 aa)) the chain is on the lumenal side. Positions 172-175 (EGTR) match the EGTR motif motif.

This sequence belongs to the 1-acyl-sn-glycerol-3-phosphate acyltransferase family. In terms of tissue distribution, expressed at high levels in the liver, at intermediate levels in the kidney, gut, heart and skeletal muscles. Undetectable in brain and spleen.

The protein localises to the endoplasmic reticulum membrane. It catalyses the reaction a 1-acyl-sn-glycero-3-phosphate + an acyl-CoA = a 1,2-diacyl-sn-glycero-3-phosphate + CoA. It carries out the reaction 1-(9Z-octadecenoyl)-sn-glycero-3-phosphate + (9Z)-octadecenoyl-CoA = 1,2-di-(9Z-octadecenoyl)-sn-glycero-3-phosphate + CoA. The enzyme catalyses 1-(9Z-octadecenoyl)-sn-glycero-3-phosphate + hexadecanoyl-CoA = 1-(9Z)-octadecenoyl-2-hexadecanoyl-sn-glycero-3-phosphate + CoA. The catalysed reaction is heptadecanoyl-CoA + 1-(9Z-octadecenoyl)-sn-glycero-3-phosphate = 1-(9Z)-octadecenoyl-2-heptadecanoyl-sn-glycero-3-phosphate + CoA. It catalyses the reaction 1-(9Z-octadecenoyl)-sn-glycero-3-phosphate + (9Z,12Z)-octadecadienoyl-CoA = 1-(9Z)-octadecenoyl-2-(9Z,12Z)-octadecadienoyl-sn-glycero-3-phosphate + CoA. It carries out the reaction 1-(9Z-octadecenoyl)-sn-glycero-3-phosphate + tetradecanoyl-CoA = 1-(9Z)-octadecenoyl-2-tetradecanoyl-sn-glycero-3-phosphate + CoA. The enzyme catalyses pentadecanoyl-CoA + 1-(9Z-octadecenoyl)-sn-glycero-3-phosphate = 1-(9Z)-octadecenoyl-2-pentadecanoyl-sn-glycero-3-phosphate + CoA. The catalysed reaction is 1-hexadecanoyl-sn-glycero-3-phosphate + (9Z)-octadecenoyl-CoA = 1-hexadecanoyl-2-(9Z-octadecenoyl)-sn-glycero-3-phosphate + CoA. It catalyses the reaction 1-tetradecanoyl-sn-glycerol 3-phosphate + (9Z)-octadecenoyl-CoA = 1-tetradecanoyl-2-(9Z)-octadecenoyl-sn-glycero-3-phosphate + CoA. It carries out the reaction 1-(9Z,12Z,15Z)-octadecatrienoyl-sn-glycero-3-phosphate + (9Z)-octadecenoyl-CoA = 1-(9Z,12Z,15Z)-octadecatrienoyl-2-(9Z)-octadecenoyl-sn-glycero-3-phosphate + CoA. The enzyme catalyses 1-(6Z,9Z,12Z-octadecatrienoyl)-sn-glycero-3-phosphate + (9Z)-octadecenoyl-CoA = (6Z,9Z,12Z)-octadecatrienoyl-2-(9Z)-octadecenoyl-sn-glycero-3-phosphate + CoA. The catalysed reaction is 1-eicosanoyl-sn-glycero-3-phosphate + (9Z)-octadecenoyl-CoA = 1-eicosanoyl-2-(9Z)-octadecenoyl-sn-glycero-3-phosphate + CoA. It catalyses the reaction 1-hexadecanoyl-sn-glycero-3-phosphate + octadecanoyl-CoA = 1-hexadecanoyl-2-octadecanoyl-sn-glycero-3-phosphate + CoA. It carries out the reaction 1-hexadecanoyl-sn-glycero-3-phosphate + (5Z,8Z,11Z,14Z)-eicosatetraenoyl-CoA = 1-hexadecanoyl-2-(5Z,8Z,11Z,14Z-eicosatetraenoyl)-sn-glycero-3-phosphate + CoA. The enzyme catalyses 1-hexadecanoyl-sn-glycero-3-phosphate + hexadecanoyl-CoA = 1,2-dihexadecanoyl-sn-glycero-3-phosphate + CoA. The catalysed reaction is 1-hexadecanoyl-sn-glycero-3-phosphate + tetradecanoyl-CoA = 1-hexadecanoyl-2-tetradecanoyl-sn-glycero-3-phosphate + CoA. It catalyses the reaction (11Z)-octadecenoyl-CoA + 1-(9Z-octadecenoyl)-sn-glycero-3-phosphate = 1-(9Z)-octadecenoyl-2-(11Z)-octadecenoyl-sn-glycero-3-phosphate + CoA. It functions in the pathway phospholipid metabolism; CDP-diacylglycerol biosynthesis; CDP-diacylglycerol from sn-glycerol 3-phosphate: step 2/3. Converts 1-acyl-sn-glycerol-3-phosphate (lysophosphatidic acid or LPA) into 1,2-diacyl-sn-glycerol-3-phosphate (phosphatidic acid or PA) by incorporating an acyl moiety at the sn-2 position of the glycerol backbone. The polypeptide is 1-acyl-sn-glycerol-3-phosphate acyltransferase beta (Agpat2) (Mus musculus (Mouse)).